A 207-amino-acid polypeptide reads, in one-letter code: Glycerol-3-phosphate acyltransferase (207 aa).

5 helical membrane passes run 4–24 (VVAT…SFAV), 58–78 (ILTL…AQLL), 86–106 (DMGI…PVFH), 120–140 (ILLA…LIIA), and 162–182 (VLLF…VLLI).

It belongs to the PlsY family. In terms of assembly, probably interacts with PlsX.

It is found in the cell inner membrane. It carries out the reaction an acyl phosphate + sn-glycerol 3-phosphate = a 1-acyl-sn-glycero-3-phosphate + phosphate. The protein operates within lipid metabolism; phospholipid metabolism. Its function is as follows. Catalyzes the transfer of an acyl group from acyl-phosphate (acyl-PO(4)) to glycerol-3-phosphate (G3P) to form lysophosphatidic acid (LPA). This enzyme utilizes acyl-phosphate as fatty acyl donor, but not acyl-CoA or acyl-ACP. The protein is Glycerol-3-phosphate acyltransferase of Ralstonia nicotianae (strain ATCC BAA-1114 / GMI1000) (Ralstonia solanacearum).